The sequence spans 168 residues: G/U mismatch-specific DNA glycosylase (168 aa).

This sequence belongs to the uracil-DNA glycosylase (UDG) superfamily. TDG/mug family. In terms of assembly, binds DNA as a monomer.

It localises to the cytoplasm. It catalyses the reaction Specifically hydrolyzes mismatched double-stranded DNA and polynucleotides, releasing free uracil.. Its function is as follows. Excises ethenocytosine and uracil, which can arise by alkylation or deamination of cytosine, respectively, from the corresponding mispairs with guanine in ds-DNA. It is capable of hydrolyzing the carbon-nitrogen bond between the sugar-phosphate backbone of the DNA and the mispaired base. The complementary strand guanine functions in substrate recognition. Required for DNA damage lesion repair in stationary-phase cells. This Klebsiella pneumoniae (strain 342) protein is G/U mismatch-specific DNA glycosylase.